Reading from the N-terminus, the 379-residue chain is Putative glutamate--cysteine ligase 2 (379 aa).

The protein belongs to the glutamate--cysteine ligase type 2 family. YbdK subfamily.

It catalyses the reaction L-cysteine + L-glutamate + ATP = gamma-L-glutamyl-L-cysteine + ADP + phosphate + H(+). Its function is as follows. ATP-dependent carboxylate-amine ligase which exhibits weak glutamate--cysteine ligase activity. This chain is Putative glutamate--cysteine ligase 2, found in Mycobacterium avium (strain 104).